Consider the following 105-residue polypeptide: MQFTSFAILAISAVASARVTRRDDSSATGADKGGTCAVGSQISCCTTNSSGSDILGNVLGGSCLLDNVSLISSLNSNCPAGNTFCCPSNQDGTLNINVSCIPVSA.

The N-terminal stretch at 1–17 (MQFTSFAILAISAVASA) is a signal peptide. 4 disulfide bridges follow: Cys-36-Cys-85, Cys-44-Cys-78, Cys-45-Cys-63, and Cys-86-Cys-100. Asn-48, Asn-67, and Asn-97 each carry an N-linked (GlcNAc...) asparagine glycan.

It belongs to the fungal hydrophobin family. Self-assembles to form functional amyloid fibrils called rodlets. Self-assembly into fibrillar rodlets occurs spontaneously at hydrophobic:hydrophilic interfaces and the rodlets further associate laterally to form amphipathic monolayers. As to expression, abundant on conidia and aerial structures formed in vitro and emerging from disease lesions on infected tomato plants.

Its subcellular location is the secreted. It is found in the cell wall. Functionally, aerial growth, conidiation, and dispersal of filamentous fungi in the environment rely upon a capability of their secreting small amphipathic proteins called hydrophobins (HPBs) with low sequence identity. Class I can self-assemble into an outermost layer of rodlet bundles on aerial cell surfaces, conferring cellular hydrophobicity that supports fungal growth, development and dispersal; whereas Class II form highly ordered films at water-air interfaces through intermolecular interactions but contribute nothing to the rodlet structure. Hcf-1 is a class I hydrophobin that is not necessary for the development of hyphae or conidia but acts as the main determinant of conidium hydrophobicity and, thus, is required for efficient water-mediated dispersal of conidia. Forms a component of the rodlet layer, but other hydrophobins must also participate in this proces. This is Class I hydrophobin 1 from Passalora fulva (Tomato leaf mold).